Consider the following 126-residue polypeptide: Protein translocase subunit SecE (126 aa).

3 helical membrane-spanning segments follow: residues leucine 18 to glycine 38, leucine 40 to alanine 60, and isoleucine 97 to valine 117.

Belongs to the SecE/SEC61-gamma family. As to quaternary structure, component of the Sec protein translocase complex. Heterotrimer consisting of SecY, SecE and SecG subunits. The heterotrimers can form oligomers, although 1 heterotrimer is thought to be able to translocate proteins. Interacts with the ribosome. Interacts with SecDF, and other proteins may be involved. Interacts with SecA.

It is found in the cell inner membrane. Essential subunit of the Sec protein translocation channel SecYEG. Clamps together the 2 halves of SecY. May contact the channel plug during translocation. The protein is Protein translocase subunit SecE of Vibrio cholerae serotype O1 (strain ATCC 39315 / El Tor Inaba N16961).